Here is a 366-residue protein sequence, read N- to C-terminus: Alanine racemase (366 aa).

The Proton acceptor; specific for D-alanine role is filled by Lys40. At Lys40 the chain carries N6-(pyridoxal phosphate)lysine. A substrate-binding site is contributed by Arg136. Residue Tyr263 is the Proton acceptor; specific for L-alanine of the active site. Residue Met310 participates in substrate binding.

The protein belongs to the alanine racemase family. Requires pyridoxal 5'-phosphate as cofactor.

The catalysed reaction is L-alanine = D-alanine. It functions in the pathway amino-acid biosynthesis; D-alanine biosynthesis; D-alanine from L-alanine: step 1/1. Catalyzes the interconversion of L-alanine and D-alanine. May also act on other amino acids. The sequence is that of Alanine racemase (alr) from Streptococcus agalactiae serotype Ia (strain ATCC 27591 / A909 / CDC SS700).